We begin with the raw amino-acid sequence, 66 residues long: Large ribosomal subunit protein uL29 (66 aa).

The protein belongs to the universal ribosomal protein uL29 family.

The sequence is that of Large ribosomal subunit protein uL29 from Borreliella afzelii (strain PKo) (Borrelia afzelii).